The chain runs to 447 residues: 3-phosphoshikimate 1-carboxyvinyltransferase (447 aa).

Residues K25, S26, and R30 each coordinate 3-phosphoshikimate. K25 serves as a coordination point for phosphoenolpyruvate. G96 and R124 together coordinate phosphoenolpyruvate. 3-phosphoshikimate is bound by residues S171, S172, Q173, S203, D325, and K352. Q173 lines the phosphoenolpyruvate pocket. D325 (proton acceptor) is an active-site residue. The phosphoenolpyruvate site is built by R356, R400, and K425.

The protein belongs to the EPSP synthase family. In terms of assembly, monomer.

The protein resides in the cytoplasm. The catalysed reaction is 3-phosphoshikimate + phosphoenolpyruvate = 5-O-(1-carboxyvinyl)-3-phosphoshikimate + phosphate. The protein operates within metabolic intermediate biosynthesis; chorismate biosynthesis; chorismate from D-erythrose 4-phosphate and phosphoenolpyruvate: step 6/7. Catalyzes the transfer of the enolpyruvyl moiety of phosphoenolpyruvate (PEP) to the 5-hydroxyl of shikimate-3-phosphate (S3P) to produce enolpyruvyl shikimate-3-phosphate and inorganic phosphate. The polypeptide is 3-phosphoshikimate 1-carboxyvinyltransferase (Bordetella petrii (strain ATCC BAA-461 / DSM 12804 / CCUG 43448)).